The primary structure comprises 471 residues: Cysteine--tRNA ligase (471 aa).

Cysteine 30 lines the Zn(2+) pocket. The 'HIGH' region motif lies at 32 to 42 (PTVYNFAHIGN). Zn(2+) contacts are provided by cysteine 212, histidine 237, and glutamate 241. A 'KMSKS' region motif is present at residues 270 to 274 (KMSKS). Lysine 273 contacts ATP.

It belongs to the class-I aminoacyl-tRNA synthetase family. Monomer. Requires Zn(2+) as cofactor.

It is found in the cytoplasm. It catalyses the reaction tRNA(Cys) + L-cysteine + ATP = L-cysteinyl-tRNA(Cys) + AMP + diphosphate. This Leptospira interrogans serogroup Icterohaemorrhagiae serovar Lai (strain 56601) protein is Cysteine--tRNA ligase.